Reading from the N-terminus, the 109-residue chain is Anther-specific protein MZm3-3 (109 aa).

The first 41 residues, 1–41, serve as a signal peptide directing secretion; sequence MTATTTTAAGGGKVQPRGLPVALSLLLLLVLAAGLGGGAEA. 4 disulfides stabilise this stretch: Cys45–Cys86, Cys55–Cys75, Cys76–Cys101, and Cys88–Cys108.

It belongs to the A9/FIL1 family. Tapetum of anthers.

Its subcellular location is the secreted. This Zea mays (Maize) protein is Anther-specific protein MZm3-3.